A 259-amino-acid chain; its full sequence is Expansin-B6 (259 aa).

The signal sequence occupies residues 1-24; it reads MASSSHRYFALLALFAVSLKFCYC. N-linked (GlcNAc...) asparagine glycosylation is present at N26. Residues 52–160 enclose the Expansin-like EG45 domain; sequence GGACGFAVAN…IRVECLYRRT (109 aa). Cystine bridges form between C55–C82, C85–C155, and C90–C96. Residues 173-254 form the Expansin-like CBD domain; it reads YYISFVVEYE…NWKPNETYRS (82 aa). N-linked (GlcNAc...) asparagine glycosylation is present at N249.

Belongs to the expansin family. Expansin B subfamily.

The protein resides in the secreted. It localises to the cell wall. Its subcellular location is the membrane. In terms of biological role, may cause loosening and extension of plant cell walls by disrupting non-covalent bonding between cellulose microfibrils and matrix glucans. This Arabidopsis thaliana (Mouse-ear cress) protein is Expansin-B6.